A 288-amino-acid chain; its full sequence is Diaminopimelate epimerase (288 aa).

3 residues coordinate substrate: Asn-13, Gln-46, and Asn-66. Cys-75 functions as the Proton donor in the catalytic mechanism. Substrate-binding positions include 76–77 (GN), Asn-166, Asn-199, and 217–218 (ER). The Proton acceptor role is filled by Cys-226. Residue 227-228 (GT) participates in substrate binding.

Belongs to the diaminopimelate epimerase family. Homodimer.

The protein localises to the cytoplasm. It catalyses the reaction (2S,6S)-2,6-diaminopimelate = meso-2,6-diaminopimelate. The protein operates within amino-acid biosynthesis; L-lysine biosynthesis via DAP pathway; DL-2,6-diaminopimelate from LL-2,6-diaminopimelate: step 1/1. Its function is as follows. Catalyzes the stereoinversion of LL-2,6-diaminopimelate (L,L-DAP) to meso-diaminopimelate (meso-DAP), a precursor of L-lysine and an essential component of the bacterial peptidoglycan. This chain is Diaminopimelate epimerase, found in Cupriavidus necator (strain ATCC 17699 / DSM 428 / KCTC 22496 / NCIMB 10442 / H16 / Stanier 337) (Ralstonia eutropha).